Reading from the N-terminus, the 504-residue chain is MSKEDNVINSFEEQANELMKERFQKLKELQSNGKDPFDVYKVERTHTSKEVKDNYEDLEGKTVTVAGRLMSKRVHGKAGFSDIHDRYGKIQLYIKINDVGEEKLKEYKTFDIGDIISVTGTVFKTKTGETSIHITDFQLVCKSLRPLPEKWHGLKDPDLRYRQRYVDLIINQDVRDTFIKRTAIIKSMREFLDNRGFLEVETPILSPIAGGAAAKPFITHHNALDIDMYLRIATELYLKRLIVGGFEKVYEIGKNFRNEGIDIRHNPEFTAIELYEAYADYNDMMEITENMIAYICEKVLGTTKVEYEGAEIDFTPPWRRLTMVDAVKEYAGVDFNIIKNDIEARTIAKEKHIEFKKELKDCTKGDVLIGLFEEFCEDKLMQPTFICDYPVENSPLTKKKRGNEAFTERFEGFVFGREVCNAYSELNDSIVQKERFMQQLKERELGDDEAYMMDDDFITSLEVGMPPTGGLGIGIDRLIMFLTDTHSIRDVILFPTMKPQPNNQ.

Mg(2+) is bound by residues Glu-411 and Glu-418.

Belongs to the class-II aminoacyl-tRNA synthetase family. As to quaternary structure, homodimer. Mg(2+) is required as a cofactor.

The protein localises to the cytoplasm. The enzyme catalyses tRNA(Lys) + L-lysine + ATP = L-lysyl-tRNA(Lys) + AMP + diphosphate. This Clostridium botulinum (strain Okra / Type B1) protein is Lysine--tRNA ligase.